The primary structure comprises 226 residues: ATP synthase F(0) complex subunit a (226 aa).

Helical transmembrane passes span 12-32 (PTMM…ILFP), 68-88 (WALM…LGLL), 97-117 (QLSM…ITGF), 138-158 (IPML…ALAV), 164-184 (ITAG…LMDI), and 189-209 (AFIT…VALI).

Belongs to the ATPase A chain family. Component of the ATP synthase complex composed at least of ATP5F1A/subunit alpha, ATP5F1B/subunit beta, ATP5MC1/subunit c (homooctomer), MT-ATP6/subunit a, MT-ATP8/subunit 8, ATP5ME/subunit e, ATP5MF/subunit f, ATP5MG/subunit g, ATP5MK/subunit k, ATP5MJ/subunit j, ATP5F1C/subunit gamma, ATP5F1D/subunit delta, ATP5F1E/subunit epsilon, ATP5PF/subunit F6, ATP5PB/subunit b, ATP5PD/subunit d, ATP5PO/subunit OSCP. ATP synthase complex consists of a soluble F(1) head domain (subunits alpha(3) and beta(3)) - the catalytic core - and a membrane F(0) domain - the membrane proton channel (subunits c, a, 8, e, f, g, k and j). These two domains are linked by a central stalk (subunits gamma, delta, and epsilon) rotating inside the F1 region and a stationary peripheral stalk (subunits F6, b, d, and OSCP). Interacts with DNAJC30; interaction is direct.

Its subcellular location is the mitochondrion inner membrane. The enzyme catalyses H(+)(in) = H(+)(out). In terms of biological role, subunit a, of the mitochondrial membrane ATP synthase complex (F(1)F(0) ATP synthase or Complex V) that produces ATP from ADP in the presence of a proton gradient across the membrane which is generated by electron transport complexes of the respiratory chain. ATP synthase complex consist of a soluble F(1) head domain - the catalytic core - and a membrane F(1) domain - the membrane proton channel. These two domains are linked by a central stalk rotating inside the F(1) region and a stationary peripheral stalk. During catalysis, ATP synthesis in the catalytic domain of F(1) is coupled via a rotary mechanism of the central stalk subunits to proton translocation. With the subunit c (ATP5MC1), forms the proton-conducting channel in the F(0) domain, that contains two crucial half-channels (inlet and outlet) that facilitate proton movement from the mitochondrial intermembrane space (IMS) into the matrix. Protons are taken up via the inlet half-channel and released through the outlet half-channel, following a Grotthuss mechanism. The sequence is that of ATP synthase F(0) complex subunit a from Halichoerus grypus (Gray seal).